Here is a 476-residue protein sequence, read N- to C-terminus: Glycogen synthase (476 aa).

K15 contributes to the ADP-alpha-D-glucose binding site.

This sequence belongs to the glycosyltransferase 1 family. Bacterial/plant glycogen synthase subfamily.

It catalyses the reaction [(1-&gt;4)-alpha-D-glucosyl](n) + ADP-alpha-D-glucose = [(1-&gt;4)-alpha-D-glucosyl](n+1) + ADP + H(+). It functions in the pathway glycan biosynthesis; glycogen biosynthesis. Its function is as follows. Synthesizes alpha-1,4-glucan chains using ADP-glucose. In Yersinia enterocolitica serotype O:8 / biotype 1B (strain NCTC 13174 / 8081), this protein is Glycogen synthase.